The sequence spans 307 residues: Nucleotide-binding protein Achl_1824 (307 aa).

30–37 (GMSGAGRS) lines the ATP pocket. A GTP-binding site is contributed by 81 to 84 (DVRS).

Belongs to the RapZ-like family.

Its function is as follows. Displays ATPase and GTPase activities. The chain is Nucleotide-binding protein Achl_1824 from Pseudarthrobacter chlorophenolicus (strain ATCC 700700 / DSM 12829 / CIP 107037 / JCM 12360 / KCTC 9906 / NCIMB 13794 / A6) (Arthrobacter chlorophenolicus).